Consider the following 405-residue polypeptide: Acetylornithine aminotransferase 2 (405 aa).

Residues 105–106 (GT) and Phe138 each bind pyridoxal 5'-phosphate. N(2)-acetyl-L-ornithine is bound at residue Arg141. 224 to 227 (DEVQ) is a binding site for pyridoxal 5'-phosphate. Position 254 is an N6-(pyridoxal phosphate)lysine (Lys254). Ser282 lines the N(2)-acetyl-L-ornithine pocket. Thr283 lines the pyridoxal 5'-phosphate pocket.

This sequence belongs to the class-III pyridoxal-phosphate-dependent aminotransferase family. ArgD subfamily. In terms of assembly, homodimer. Requires pyridoxal 5'-phosphate as cofactor.

The protein localises to the cytoplasm. The catalysed reaction is N(2)-acetyl-L-ornithine + 2-oxoglutarate = N-acetyl-L-glutamate 5-semialdehyde + L-glutamate. It functions in the pathway amino-acid biosynthesis; L-arginine biosynthesis; N(2)-acetyl-L-ornithine from L-glutamate: step 4/4. The polypeptide is Acetylornithine aminotransferase 2 (Caulobacter vibrioides (strain ATCC 19089 / CIP 103742 / CB 15) (Caulobacter crescentus)).